Here is a 168-residue protein sequence, read N- to C-terminus: MATVTSAAVSIPSFTGLKAGSASNAKVSASAKVSASPLPRLSIKASMKDVGAAVVATAASAMIASNAMAIDVLLGADDGSLAFVPSEFSISPGEKIVFKNNAGFPHNIVFDEDSIPSGVDASKISMSEEDLLNAKGETFEVALSNKGEYSFYCSPHQGAGMVGKVTVN.

The transit peptide at 1–69 (MATVTSAAVS…SAMIASNAMA (69 aa)) directs the protein to the chloroplast. Residues 70-168 (IDVLLGADDG…AGMVGKVTVN (99 aa)) enclose the Plastocyanin-like domain. Cu cation is bound by residues His-106, Cys-153, His-156, and Met-161.

The protein belongs to the plastocyanin family. Cu(2+) is required as a cofactor.

Its subcellular location is the plastid. The protein localises to the chloroplast thylakoid membrane. Functionally, participates in electron transfer between P700 and the cytochrome b6-f complex in photosystem I. In Populus nigra (Lombardy poplar), this protein is Plastocyanin A, chloroplastic (PETE).